Consider the following 432-residue polypeptide: Histidinol dehydrogenase (432 aa).

NAD(+) contacts are provided by Tyr-130, Gln-191, and Asn-214. Residues Ser-237, Gln-259, and His-262 each contribute to the substrate site. Zn(2+) contacts are provided by Gln-259 and His-262. Residues Glu-327 and His-328 each act as proton acceptor in the active site. The substrate site is built by His-328, Asp-361, Glu-415, and His-420. Asp-361 is a binding site for Zn(2+). His-420 lines the Zn(2+) pocket.

It belongs to the histidinol dehydrogenase family. It depends on Zn(2+) as a cofactor.

It catalyses the reaction L-histidinol + 2 NAD(+) + H2O = L-histidine + 2 NADH + 3 H(+). Its pathway is amino-acid biosynthesis; L-histidine biosynthesis; L-histidine from 5-phospho-alpha-D-ribose 1-diphosphate: step 9/9. Catalyzes the sequential NAD-dependent oxidations of L-histidinol to L-histidinaldehyde and then to L-histidine. The polypeptide is Histidinol dehydrogenase (Agrobacterium fabrum (strain C58 / ATCC 33970) (Agrobacterium tumefaciens (strain C58))).